Here is a 312-residue protein sequence, read N- to C-terminus: MIEIKHLRTLQALKNNGSLSAAAIQLHQTQSAISHQFNELEKKLGFKLFIRKSNPIKFTAQGEILLQLSKEILPKIHKAIQNCKKTHQMIIKLAIECHSCIQWLTPALKIFQKKWPRVEIDFYSDMIFSPQPSLQQGKLDIVLTSEVLPRSNLFYFPIFDFEVRLVLSPNHPLAQKKHNILPEDLISEILMIYPVKRDKLDIWKFFLQPAGIIPIFKNVNNTLLLIQMVAAKMGITALPHWVVDTFEKQGLVVTKKLGDGIWKRLYAAIRDGDQKELIIKNFIYAIRLHVCTHLKFIRDTQKPHFFKNVKNI.

Positions 1 to 59 (MIEIKHLRTLQALKNNGSLSAAAIQLHQTQSAISHQFNELEKKLGFKLFIRKSNPIKFT) constitute an HTH lysR-type domain. A DNA-binding region (H-T-H motif) is located at residues 19–38 (LSAAAIQLHQTQSAISHQFN).

It belongs to the LysR transcriptional regulatory family.

Its subcellular location is the cytoplasm. Control of the last step in methionine biosynthesis; MetR is a positive activator of the metA, metE and metH genes. This is HTH-type transcriptional regulator MetR (metR) from Buchnera aphidicola subsp. Schizaphis graminum (strain Sg).